Consider the following 92-residue polypeptide: Small ribosomal subunit protein bS21A (92 aa).

The span at 25-52 (GVFREMKQRRSYEKPSERKTREKSEAIR) shows a compositional bias: basic and acidic residues. Residues 25–92 (GVFREMKQRR…LPQTAARPAG (68 aa)) are disordered.

This sequence belongs to the bacterial ribosomal protein bS21 family.

This is Small ribosomal subunit protein bS21A from Bradyrhizobium diazoefficiens (strain JCM 10833 / BCRC 13528 / IAM 13628 / NBRC 14792 / USDA 110).